Consider the following 453-residue polypeptide: Nuclear distribution protein PAC1-2 (453 aa).

Residues 9 to 41 (QADELHKSIVAYLTANNLSTTAATLREELSLGE) form the LisH domain. Positions 63 to 87 (VVRLQKKVMDLESRSVALQSELEHS) form a coiled coil. Residues 84–108 (LEHSTPASLSKRKDPTSWLPRSPPR) are disordered. 7 WD repeats span residues 113–154 (SHQA…RTLK), 156–196 (HTRA…KNTR), 200–243 (GHDH…CIKT), 246–285 (GHTG…PESK), 290–350 (GHEN…IKTL), 352–391 (GHDN…RCVK), and 396–448 (AHGQ…DKVV).

Belongs to the WD repeat LIS1/nudF family. In terms of assembly, self-associates. Interacts with NDL1 and dynein.

The protein resides in the cytoplasm. It localises to the cytoskeleton. Its subcellular location is the spindle pole. In terms of biological role, positively regulates the activity of the minus-end directed microtubule motor protein dynein. May enhance dynein-mediated microtubule sliding by targeting dynein to the microtubule plus end. Required for nuclear migration during vegetative growth as well as development. Required for retrograde early endosome (EE) transport from the hyphal tip. Required for localization of dynein to the mitotic spindle poles. Recruits additional proteins to the dynein complex at SPBs. The protein is Nuclear distribution protein PAC1-2 of Chaetomium globosum (strain ATCC 6205 / CBS 148.51 / DSM 1962 / NBRC 6347 / NRRL 1970) (Soil fungus).